Consider the following 477-residue polypeptide: Glycogen synthase (477 aa).

Residue lysine 15 participates in ADP-alpha-D-glucose binding.

It belongs to the glycosyltransferase 1 family. Bacterial/plant glycogen synthase subfamily.

The enzyme catalyses [(1-&gt;4)-alpha-D-glucosyl](n) + ADP-alpha-D-glucose = [(1-&gt;4)-alpha-D-glucosyl](n+1) + ADP + H(+). The protein operates within glycan biosynthesis; glycogen biosynthesis. In terms of biological role, synthesizes alpha-1,4-glucan chains using ADP-glucose. The polypeptide is Glycogen synthase (Escherichia fergusonii (strain ATCC 35469 / DSM 13698 / CCUG 18766 / IAM 14443 / JCM 21226 / LMG 7866 / NBRC 102419 / NCTC 12128 / CDC 0568-73)).